The sequence spans 346 residues: Phenylalanine--tRNA ligase alpha subunit (346 aa).

E259 contributes to the Mg(2+) binding site.

This sequence belongs to the class-II aminoacyl-tRNA synthetase family. Phe-tRNA synthetase alpha subunit type 1 subfamily. As to quaternary structure, tetramer of two alpha and two beta subunits. It depends on Mg(2+) as a cofactor.

It is found in the cytoplasm. It carries out the reaction tRNA(Phe) + L-phenylalanine + ATP = L-phenylalanyl-tRNA(Phe) + AMP + diphosphate + H(+). The polypeptide is Phenylalanine--tRNA ligase alpha subunit (Lactococcus lactis subsp. lactis (strain IL1403) (Streptococcus lactis)).